The chain runs to 227 residues: Orotidine 5'-phosphate decarboxylase (227 aa).

Residues Asp8, Lys30, 59-68 (DLKLYDIPNT), Thr118, Arg178, Gln187, Gly207, and Arg208 each bind substrate. The active-site Proton donor is Lys61.

It belongs to the OMP decarboxylase family. Type 1 subfamily. As to quaternary structure, homodimer.

The catalysed reaction is orotidine 5'-phosphate + H(+) = UMP + CO2. The protein operates within pyrimidine metabolism; UMP biosynthesis via de novo pathway; UMP from orotate: step 2/2. Its function is as follows. Catalyzes the decarboxylation of orotidine 5'-monophosphate (OMP) to uridine 5'-monophosphate (UMP). This chain is Orotidine 5'-phosphate decarboxylase, found in Nitratiruptor sp. (strain SB155-2).